The primary structure comprises 556 residues: PTS system fructose-specific EIIB'BC component (556 aa).

2 PTS EIIB type-2 domains span residues 1 to 85 (MKLF…LANG) and 106 to 201 (IVAV…KAFK). C112 serves as the catalytic Phosphocysteine intermediate; for EIIB activity. The residue at position 112 (C112) is a Phosphocysteine; by EIIA. The region spanning 224–556 (VYKHLMTGVS…AIIKSKNNAE (333 aa)) is the PTS EIIC type-2 domain. The next 10 membrane-spanning stretches (helical) occupy residues 237–257 (PLVV…FNVI), 275–295 (SGVA…FSIA), 302–322 (VGLI…GGII), 324–344 (GFLA…PASL), 349–369 (PILI…IYLI), 390–410 (VNAI…MGGP), 431–451 (MAAA…ATWI), 468–488 (FVLG…ADPI), 490–510 (VIIS…GLNI), and 529–549 (LKYL…YAII).

It localises to the cell inner membrane. It catalyses the reaction D-fructose(out) + N(pros)-phospho-L-histidyl-[protein] = D-fructose 1-phosphate(in) + L-histidyl-[protein]. Functionally, the phosphoenolpyruvate-dependent sugar phosphotransferase system (sugar PTS), a major carbohydrate active transport system, catalyzes the phosphorylation of incoming sugar substrates concomitantly with their translocation across the cell membrane. The enzyme II FruAB PTS system is involved in fructose transport. This chain is PTS system fructose-specific EIIB'BC component, found in Haemophilus influenzae (strain ATCC 51907 / DSM 11121 / KW20 / Rd).